Consider the following 112-residue polypeptide: Low molecular weight protein antigen 6 (112 aa).

The protein localises to the secreted. The protein is Low molecular weight protein antigen 6 (cfp6) of Mycobacterium bovis (strain ATCC BAA-935 / AF2122/97).